A 184-amino-acid chain; its full sequence is MGSGMSQILPGLYIGNFKDARDAEQLSRNKVTHILSVHDTARPMLEGVKYLCIPAADTPSQNLTRHFKESIKFIHECRLQGESCLVHCLAGVSRSVTLVIAYIMTVTDFGWEDALHTVRAGRSCANPNLGFQRQLQEFEKHEVHQYRQWLREEYGENPLRDAEEAKNILAAPGILKYWAFLRRL.

Residue G2 is the site of N-myristoyl glycine attachment. A Tyrosine-protein phosphatase domain is found at 4 to 144 (GMSQILPGLY…LQEFEKHEVH (141 aa)). C88 serves as the catalytic Phosphocysteine intermediate. A protein contacts are provided by L89, A90, V92, S93, and R94.

Belongs to the protein-tyrosine phosphatase family. Non-receptor class dual specificity subfamily. Monomer. Interacts with LCK; the interaction is direct. Interacts with UBR2; the interaction is direct. Myristoylation regulates subcellular location, and is necessary for activation of JNK.

The protein resides in the cytoplasm. It carries out the reaction O-phospho-L-tyrosyl-[protein] + H2O = L-tyrosyl-[protein] + phosphate. It catalyses the reaction O-phospho-L-seryl-[protein] + H2O = L-seryl-[protein] + phosphate. The catalysed reaction is O-phospho-L-threonyl-[protein] + H2O = L-threonyl-[protein] + phosphate. Dual specificity phosphatase; can dephosphorylate both phosphotyrosine and phosphoserine or phosphothreonine residues. Activates the JNK signaling pathway. Inhibits T-cell receptor signaling and T-cell mediated immune responses, acting, at least in part, by inducing degradation of E3 ubiquitin ligase UBR2. Dephosphorylates and thereby induces 'Lys-48'-linked ubiquitination of UBR2, leading to proteasomal degradation of UBR2. Dephosphorylates and thereby inactivates tyrosine kinase LCK. Inhibits UBR2-mediated 'Lys-63'-linked ubiquitination of LCK. May play a role in B-cell receptor (BCR) signaling and B-cell function. In Mus musculus (Mouse), this protein is Dual specificity protein phosphatase 22 (Dusp22).